The sequence spans 333 residues: 4-hydroxy-3-methylbut-2-enyl diphosphate reductase (333 aa).

C20 is a [4Fe-4S] cluster binding site. Residues H49 and H85 each contribute to the (2E)-4-hydroxy-3-methylbut-2-enyl diphosphate site. Residues H49 and H85 each coordinate dimethylallyl diphosphate. Isopentenyl diphosphate is bound by residues H49 and H85. A [4Fe-4S] cluster-binding site is contributed by C107. (2E)-4-hydroxy-3-methylbut-2-enyl diphosphate is bound at residue H135. A dimethylallyl diphosphate-binding site is contributed by H135. H135 is a binding site for isopentenyl diphosphate. The active-site Proton donor is the E137. T176 contacts (2E)-4-hydroxy-3-methylbut-2-enyl diphosphate. Position 206 (C206) interacts with [4Fe-4S] cluster. Residues S234, S235, N236, and S279 each contribute to the (2E)-4-hydroxy-3-methylbut-2-enyl diphosphate site. Positions 234, 235, 236, and 279 each coordinate dimethylallyl diphosphate. Residues S234, S235, N236, and S279 each coordinate isopentenyl diphosphate.

It belongs to the IspH family. [4Fe-4S] cluster serves as cofactor.

The catalysed reaction is isopentenyl diphosphate + 2 oxidized [2Fe-2S]-[ferredoxin] + H2O = (2E)-4-hydroxy-3-methylbut-2-enyl diphosphate + 2 reduced [2Fe-2S]-[ferredoxin] + 2 H(+). It catalyses the reaction dimethylallyl diphosphate + 2 oxidized [2Fe-2S]-[ferredoxin] + H2O = (2E)-4-hydroxy-3-methylbut-2-enyl diphosphate + 2 reduced [2Fe-2S]-[ferredoxin] + 2 H(+). It participates in isoprenoid biosynthesis; dimethylallyl diphosphate biosynthesis; dimethylallyl diphosphate from (2E)-4-hydroxy-3-methylbutenyl diphosphate: step 1/1. It functions in the pathway isoprenoid biosynthesis; isopentenyl diphosphate biosynthesis via DXP pathway; isopentenyl diphosphate from 1-deoxy-D-xylulose 5-phosphate: step 6/6. Its function is as follows. Catalyzes the conversion of 1-hydroxy-2-methyl-2-(E)-butenyl 4-diphosphate (HMBPP) into a mixture of isopentenyl diphosphate (IPP) and dimethylallyl diphosphate (DMAPP). Acts in the terminal step of the DOXP/MEP pathway for isoprenoid precursor biosynthesis. The sequence is that of 4-hydroxy-3-methylbut-2-enyl diphosphate reductase from Rhizobium leguminosarum bv. trifolii (strain WSM2304).